A 459-amino-acid polypeptide reads, in one-letter code: uncharacterized protein (459 aa).

The TRAM domain maps to 2-60 (NLRVKQKIPLKIKRMGINGEGIGFYKRTLVFVPGALKGEEIFCQITSVKHNFVQARLLT). [4Fe-4S] cluster-binding residues include Cys-73, Cys-79, Cys-82, and Cys-162. S-adenosyl-L-methionine contacts are provided by Gln-284, Tyr-313, Asp-334, and Asp-382. Cys-409 (nucleophile) is an active-site residue.

This sequence belongs to the class I-like SAM-binding methyltransferase superfamily. RNA M5U methyltransferase family.

This is an uncharacterized protein from Streptococcus mutans serotype c (strain ATCC 700610 / UA159).